Consider the following 680-residue polypeptide: Harmonin-binding protein USHBP1 (680 aa).

Residues 1-15 show a composition bias toward basic residues; sequence MSARATRPRSRRGRH. Disordered stretches follow at residues 1-101, 135-162, and 217-250; these read MSAR…GPAE, PVEAEDRDPGAPGSFGNEEEASGPGQQE, and ASPPPSMLRAGRRNSNSSSSGAERRPWAPQDSPM. Basic and acidic residues predominate over residues 76–86; sequence PEERREPEVEA. Coiled coils occupy residues 177–219, 362–386, and 479–506; these read LGTR…EASP, ATNGDLQAAEKEASRLLVKKEVAMD, and LADLVLRLQLAQREKRGLELREAALRAQ. A disordered region spans residues 524-562; sequence LMGDGSSGGSSEDPSSEEEAGEDRQQHYQGPPALLGGQM. The stretch at 573 to 661 forms a coiled coil; it reads QELSASLTRA…QQAEELAVLT (89 aa).

Belongs to the MCC family. Interacts via its C-terminus with the first PDZ domain of USH1C.

This Rattus norvegicus (Rat) protein is Harmonin-binding protein USHBP1.